The following is a 739-amino-acid chain: Probable beta-glucosidase L (739 aa).

The first 17 residues, Met-1–Ala-17, serve as a signal peptide directing secretion. Residues Asn-40 and Asn-224 are each glycosylated (N-linked (GlcNAc...) asparagine). Asp-252 is an active-site residue. An N-linked (GlcNAc...) asparagine glycan is attached at Asn-398.

This sequence belongs to the glycosyl hydrolase 3 family.

It is found in the secreted. It catalyses the reaction Hydrolysis of terminal, non-reducing beta-D-glucosyl residues with release of beta-D-glucose.. It participates in glycan metabolism; cellulose degradation. Beta-glucosidases are one of a number of cellulolytic enzymes involved in the degradation of cellulosic biomass. Catalyzes the last step releasing glucose from the inhibitory cellobiose. This is Probable beta-glucosidase L (bglL) from Aspergillus fumigatus (strain ATCC MYA-4609 / CBS 101355 / FGSC A1100 / Af293) (Neosartorya fumigata).